Consider the following 321-residue polypeptide: Cytochrome c biogenesis protein CcsA (321 aa).

8 consecutive transmembrane segments (helical) span residues 12–32 (HISF…LLVY), 45–62 (MIAT…RWIS), 71–91 (LYES…ILYI), 98–117 (LNAI…TSGL), 143–163 (MLLS…LIVI), 227–247 (VISL…VWAN), 260–277 (ETWA…LHTR), and 292–312 (VASI…LLGI).

Belongs to the CcmF/CycK/Ccl1/NrfE/CcsA family. In terms of assembly, may interact with Ccs1.

The protein resides in the plastid. The protein localises to the chloroplast thylakoid membrane. Functionally, required during biogenesis of c-type cytochromes (cytochrome c6 and cytochrome f) at the step of heme attachment. This is Cytochrome c biogenesis protein CcsA from Phalaenopsis aphrodite subsp. formosana (Moth orchid).